We begin with the raw amino-acid sequence, 565 residues long: Periplasmic trehalase (565 aa).

The first 30 residues, Met-1–Ala-30, serve as a signal peptide directing secretion. Substrate-binding positions include Arg-152, Trp-159 to Asp-160, Asn-196, Arg-205 to Gln-207, Arg-277 to Glu-279, and Gly-310. Catalysis depends on proton donor/acceptor residues Asp-312 and Glu-496. Glu-511 contributes to the substrate binding site. The interval Asp-540–Pro-565 is disordered. Residues Thr-548–Pro-565 are compositionally biased toward polar residues.

This sequence belongs to the glycosyl hydrolase 37 family. In terms of assembly, monomer.

It localises to the periplasm. It carries out the reaction alpha,alpha-trehalose + H2O = alpha-D-glucose + beta-D-glucose. In terms of biological role, provides the cells with the ability to utilize trehalose at high osmolarity by splitting it into glucose molecules that can subsequently be taken up by the phosphotransferase-mediated uptake system. In Shigella flexneri serotype 5b (strain 8401), this protein is Periplasmic trehalase.